Reading from the N-terminus, the 276-residue chain is Large ribosomal subunit protein uL2 (276 aa).

The interval 224–276 (VMNPVDHPHGGGEGKAPIGRKSPMTPWGKPTLGYKTRKKKNKSDKFIIRRRKK) is disordered. Residues 258–276 (KTRKKKNKSDKFIIRRRKK) show a composition bias toward basic residues.

Belongs to the universal ribosomal protein uL2 family. As to quaternary structure, part of the 50S ribosomal subunit. Forms a bridge to the 30S subunit in the 70S ribosome.

One of the primary rRNA binding proteins. Required for association of the 30S and 50S subunits to form the 70S ribosome, for tRNA binding and peptide bond formation. It has been suggested to have peptidyltransferase activity; this is somewhat controversial. Makes several contacts with the 16S rRNA in the 70S ribosome. This chain is Large ribosomal subunit protein uL2, found in Geobacillus thermodenitrificans (strain NG80-2).